We begin with the raw amino-acid sequence, 151 residues long: MKAIIQRVKSSSVTVEGEVISEIKQGLMCLIGIGRDDTKEDAEYITRKILNLRLWKNEDGTKNWDRSVQQMDYEILFVSQFTLFAQLKGNKQSYHLAMAPELSKQFYLDFLENAKKSYKPEKIKDGRFGAMMDVQLINDGPVTIQLDSKEK.

A Gly-cisPro motif, important for rejection of L-amino acids motif is present at residues 140 to 141 (GP).

This sequence belongs to the DTD family. In terms of assembly, homodimer.

Its subcellular location is the cytoplasm. The catalysed reaction is glycyl-tRNA(Ala) + H2O = tRNA(Ala) + glycine + H(+). It carries out the reaction a D-aminoacyl-tRNA + H2O = a tRNA + a D-alpha-amino acid + H(+). An aminoacyl-tRNA editing enzyme that deacylates mischarged D-aminoacyl-tRNAs. Also deacylates mischarged glycyl-tRNA(Ala), protecting cells against glycine mischarging by AlaRS. Acts via tRNA-based rather than protein-based catalysis; rejects L-amino acids rather than detecting D-amino acids in the active site. By recycling D-aminoacyl-tRNA to D-amino acids and free tRNA molecules, this enzyme counteracts the toxicity associated with the formation of D-aminoacyl-tRNA entities in vivo and helps enforce protein L-homochirality. This is D-aminoacyl-tRNA deacylase (dtd) from Dictyostelium discoideum (Social amoeba).